Reading from the N-terminus, the 866-residue chain is FHIP family protein v1g243165 (866 aa).

Disordered stretches follow at residues 739–761 (RDGP…ASTS) and 781–814 (GSTA…ESQT). Residues 751-761 (SIGSIGSASTS) show a composition bias toward low complexity.

Belongs to the FHIP family.

This Nematostella vectensis (Starlet sea anemone) protein is FHIP family protein v1g243165.